The primary structure comprises 280 residues: 4-deoxy-L-threo-5-hexosulose-uronate ketol-isomerase (280 aa).

4 residues coordinate Zn(2+): H198, H200, E205, and H247.

Belongs to the KduI family. It depends on Zn(2+) as a cofactor.

The enzyme catalyses 5-dehydro-4-deoxy-D-glucuronate = 3-deoxy-D-glycero-2,5-hexodiulosonate. The protein operates within glycan metabolism; pectin degradation; 2-dehydro-3-deoxy-D-gluconate from pectin: step 4/5. Its function is as follows. Catalyzes the isomerization of 5-dehydro-4-deoxy-D-glucuronate to 3-deoxy-D-glycero-2,5-hexodiulosonate. The chain is 4-deoxy-L-threo-5-hexosulose-uronate ketol-isomerase from Lachnospira eligens (strain ATCC 27750 / DSM 3376 / VPI C15-48 / C15-B4) (Eubacterium eligens).